Consider the following 236-residue polypeptide: 2-C-methyl-D-erythritol 4-phosphate cytidylyltransferase (236 aa).

Belongs to the IspD/TarI cytidylyltransferase family. IspD subfamily.

The enzyme catalyses 2-C-methyl-D-erythritol 4-phosphate + CTP + H(+) = 4-CDP-2-C-methyl-D-erythritol + diphosphate. Its pathway is isoprenoid biosynthesis; isopentenyl diphosphate biosynthesis via DXP pathway; isopentenyl diphosphate from 1-deoxy-D-xylulose 5-phosphate: step 2/6. In terms of biological role, catalyzes the formation of 4-diphosphocytidyl-2-C-methyl-D-erythritol from CTP and 2-C-methyl-D-erythritol 4-phosphate (MEP). The polypeptide is 2-C-methyl-D-erythritol 4-phosphate cytidylyltransferase (Burkholderia pseudomallei (strain 1106a)).